A 219-amino-acid polypeptide reads, in one-letter code: ATP synthase protein MI25 (219 aa).

Residues 29–49 (ISIYNEEMIVARCFIGFLILS) form a helical membrane-spanning segment.

Belongs to the ATPase protein MI25 family. In terms of assembly, F-type ATPases have 2 components, CF(1) - the catalytic core - and CF(0) - the membrane proton channel. CF(1) has five subunits: alpha(3), beta(3), gamma(1), delta(1), epsilon(1). CF(0) has three main subunits: a, b and c.

The protein localises to the mitochondrion membrane. This is one of the chains of the nonenzymatic component (CF(0) subunit) of the mitochondrial ATPase complex. This Zea mays (Maize) protein is ATP synthase protein MI25.